Here is a 253-residue protein sequence, read N- to C-terminus: Flap endonuclease Xni (253 aa).

Residue Asp-104 coordinates Mg(2+). The region spanning 160 to 250 is the 5'-3' exonuclease domain; that stretch reads VAPQQLTDFW…HGNLQQLRLN (91 aa). K(+) contacts are provided by Leu-171, Ala-172, Pro-180, Ile-182, and Ile-185. Residues 184-189 are interaction with DNA; that stretch reads GIGAKT.

It belongs to the Xni family. It depends on Mg(2+) as a cofactor. K(+) is required as a cofactor.

Functionally, has flap endonuclease activity. During DNA replication, flap endonucleases cleave the 5'-overhanging flap structure that is generated by displacement synthesis when DNA polymerase encounters the 5'-end of a downstream Okazaki fragment. This chain is Flap endonuclease Xni, found in Edwardsiella ictaluri (strain 93-146).